We begin with the raw amino-acid sequence, 349 residues long: Acyl-CoA:acyl-CoA alkyltransferase (349 aa).

The active-site Proton acceptor is the Glu-97. Catalysis depends on Cys-123, which acts as the Acyl-thioester intermediate.

The protein belongs to the thiolase-like superfamily. OleA family.

It catalyses the reaction a 1,2-saturated acyl-CoA + an acyl-CoA + H2O = an (R)-2-alkyl-3-oxoalkanoate + 2 CoA + H(+). Its function is as follows. Involved in olefin biosynthesis. Catalyzes a non-decarboxylative head-to-head Claisen condensation of two acyl-CoA molecules, generating an (R)-2-alkyl-3-oxoalkanoate. The S.oneidensis oleABCD genes produce 3,6,9,12,15,19,22,25,28-hentriacontanonaene, which may aid the cells in adapting to a sudden drop in temperature. The chain is Acyl-CoA:acyl-CoA alkyltransferase from Shewanella oneidensis (strain ATCC 700550 / JCM 31522 / CIP 106686 / LMG 19005 / NCIMB 14063 / MR-1).